Reading from the N-terminus, the 807-residue chain is Nucleolar complex protein 3 homolog (807 aa).

Disordered regions lie at residues 27 to 93 (KLKN…DMMD) and 167 to 191 (EKPV…EVIE). Residues 40–51 (KKYRKEQRKLRQ) are compositionally biased toward basic residues. Over residues 52-78 (AVKDAVSKKPIPLEDPKSKRPVKRMER) the composition is skewed to basic and acidic residues. 2 stretches are compositionally biased toward acidic residues: residues 79–93 (EEDE…DMMD) and 174–190 (QQEE…EEVI). A Glycyl lysine isopeptide (Lys-Gly) (interchain with G-Cter in SUMO2) cross-link involves residue Lys332. A coiled-coil region spans residues 449–489 (FKEKRKTLSRMQRKWKKAEEKLERELREAEASESTEKKLKL).

It belongs to the CBF/MAK21 family.

Its subcellular location is the nucleus. The protein resides in the nucleolus. It is found in the nucleus speckle. May be required for adipogenesis. The sequence is that of Nucleolar complex protein 3 homolog (Noc3l) from Mus musculus (Mouse).